The sequence spans 150 residues: Macrodomain Ter protein (150 aa).

This sequence belongs to the MatP family. In terms of assembly, homodimer.

It localises to the cytoplasm. In terms of biological role, required for spatial organization of the terminus region of the chromosome (Ter macrodomain) during the cell cycle. Prevents early segregation of duplicated Ter macrodomains during cell division. Binds specifically to matS, which is a 13 bp signature motif repeated within the Ter macrodomain. The sequence is that of Macrodomain Ter protein from Escherichia coli O6:K15:H31 (strain 536 / UPEC).